We begin with the raw amino-acid sequence, 257 residues long: Na(+)-translocating NADH-quinone reductase subunit C (257 aa).

A helical membrane pass occupies residues 13–33 (LTVVVLLSLICSLIVASAAVL). An FMN phosphoryl threonine modification is found at Thr224.

The protein belongs to the NqrC family. As to quaternary structure, composed of six subunits; NqrA, NqrB, NqrC, NqrD, NqrE and NqrF. The cofactor is FMN.

The protein resides in the cell inner membrane. The enzyme catalyses a ubiquinone + n Na(+)(in) + NADH + H(+) = a ubiquinol + n Na(+)(out) + NAD(+). Its function is as follows. NQR complex catalyzes the reduction of ubiquinone-1 to ubiquinol by two successive reactions, coupled with the transport of Na(+) ions from the cytoplasm to the periplasm. NqrA to NqrE are probably involved in the second step, the conversion of ubisemiquinone to ubiquinol. The protein is Na(+)-translocating NADH-quinone reductase subunit C of Haemophilus ducreyi (strain 35000HP / ATCC 700724).